A 1163-amino-acid polypeptide reads, in one-letter code: E3 ubiquitin-protein ligase TRIM33 (1163 aa).

A disordered region spans residues 1 to 119 (MEVEASGTED…ASTSSSSSTP (119 aa)). The segment covering 27–38 (TETKEAADEAKS) has biased composition (basic and acidic residues). The segment covering 45-54 (TPTTSSDSSS) has biased composition (low complexity). A compositionally biased stretch (pro residues) spans 72–87 (DPPPPPPPPPPPPPST). Low complexity predominate over residues 88–99 (PADSTAAAASPA). The RING-type zinc-finger motif lies at 129–188 (CAVCKQSLQNRDCEPKLLPCLHSFCLKCIPQPDRKITMPVQGPHGQDTRIVNVMRCTVCH). The B box-type 1; atypical zinc finger occupies 215-268 (NSTQVCTSCEDNASAIGFCVECGEWLCKTCIEAHQRVKFTKDHKIRKKEEVSPE). Zn(2+)-binding residues include Cys220, Cys223, Cys244, His257, Cys280, His283, Cys303, and His308. The segment at 275 to 316 (QRPVFCPVHKQEALKLFCETCDTLTCRDCQLLEHKEHRYQFL) adopts a B box-type 2 zinc-finger fold. A coiled-coil region spans residues 345-369 (ASEVQKRLKEVAETHKKVEHEIKIA). Over residues 524 to 533 (MQQAAIAQKH) the composition is skewed to low complexity. Disordered stretches follow at residues 524–555 (MQQA…QQQQ), 575–599 (QIQQ…QMIQ), 656–706 (LQRQ…VITP), 753–848 (TVGP…PLPI), and 867–918 (NVKS…KEDD). Positions 534-548 (QQQHQHHQQQQHQHQ) are enriched in basic residues. Positions 580–590 (MRIASQMSQHP) are enriched in polar residues. Low complexity-rich tracts occupy residues 678 to 691 (SAAN…ASMA) and 753 to 797 (TVGP…SGTT). Over residues 821–830 (KTERTKDGRR) the composition is skewed to basic and acidic residues. Residues 870-889 (SEPQSDNLSSCTNPNSRATL) are compositionally biased toward polar residues. The segment at 921-968 (EDWCAVCQNGGELLCCDHCPKVFHITCHIPTLKSSPSGDWMCTFCRNL) adopts a PHD-type zinc-finger fold. The region spanning 991-1114 (AMSPEEQRRC…LYFEERLLEI (124 aa)) is the Bromo domain. The interval 1128–1147 (TQIEAEKEDSDDSDDDIIQP) is disordered. Residues 1133–1144 (EKEDSDDSDDDI) show a composition bias toward acidic residues.

The protein localises to the nucleus. It carries out the reaction S-ubiquitinyl-[E2 ubiquitin-conjugating enzyme]-L-cysteine + [acceptor protein]-L-lysine = [E2 ubiquitin-conjugating enzyme]-L-cysteine + N(6)-ubiquitinyl-[acceptor protein]-L-lysine.. The protein operates within protein modification; protein ubiquitination. Its function is as follows. May act as an E3 ubiquitin-protein ligase and a transcriptional repressor. Involved in the regulation of embryonic and adult hematopoiesis. Required for normal development and survival of both committed erythroid progenitor cells and posterior mesenchymal cells. The sequence is that of E3 ubiquitin-protein ligase TRIM33 (trim33) from Danio rerio (Zebrafish).